A 793-amino-acid chain; its full sequence is Protocadherin beta-7 (793 aa).

A signal peptide spans 1–26 (MEARVERAVQKRQVLFLCVFLGMSWA). The Extracellular segment spans residues 27–688 (GAEPLRYFVA…DQANLLTVYL (662 aa)). Cadherin domains are found at residues 35 to 133 (VAEE…APVF), 138 to 242 (ISLK…APDF), 247 to 347 (YKVQ…RPEL), 352 to 451 (LTSP…APAF), and 456 to 561 (YTLF…SPFV). N-linked (GlcNAc...) asparagine glycosylation occurs at asparagine 169. Asparagine 418 and asparagine 436 each carry an N-linked (GlcNAc...) asparagine glycan. Asparagine 567 carries N-linked (GlcNAc...) asparagine glycosylation. In terms of domain architecture, Cadherin 6 spans 568-671 (SSAPCTEPLP…LVDGFSQPYL (104 aa)). Residues 689-709 (VVALASVSSLFLLSVLLFVAV) traverse the membrane as a helical segment. At 710–793 (RLCRRSRAAP…NRPFQNNLGF (84 aa)) the chain is on the cytoplasmic side.

Its subcellular location is the cell membrane. In terms of biological role, potential calcium-dependent cell-adhesion protein. May be involved in the establishment and maintenance of specific neuronal connections in the brain. This chain is Protocadherin beta-7 (PCDHB7), found in Pan troglodytes (Chimpanzee).